We begin with the raw amino-acid sequence, 648 residues long: ATP-dependent DNA helicase Q1 (648 aa).

Residues 100–275 (INVTMARKDI…QKILCVGKCL (176 aa)) form the Helicase ATP-binding domain. 113-120 (MPTGGGKS) serves as a coordination point for ATP. The DEVH box signature appears at 219–222 (DEVH). Positions 299–451 (DFTEDIVKLI…EMVSYCQNVS (153 aa)) constitute a Helicase C-terminal domain. Zn(2+) is bound by residues cysteine 453, cysteine 471, cysteine 475, and cysteine 478. An N6-acetyllysine mark is found at lysine 514 and lysine 522. Serine 597 bears the Phosphoserine mark. Residues 601–648 (ALSEARQVEQVDSKGEEQSSGNSQKSKSRLQPSGSKNAGAKKRKLDDA) are disordered. A compositionally biased stretch (basic and acidic residues) spans 606–617 (RQVEQVDSKGEE). The span at 618–636 (QSSGNSQKSKSRLQPSGSK) shows a compositional bias: polar residues. Phosphoserine is present on serine 633. The span at 639–648 (GAKKRKLDDA) shows a compositional bias: basic residues.

This sequence belongs to the helicase family. RecQ subfamily. May form homodimers or higher order oligomers. Interacts with EXO1. Interacts with MLH1. Interacts with PARP1. Requires Mg(2+) as cofactor. Mn(2+) is required as a cofactor. It depends on Zn(2+) as a cofactor. In terms of tissue distribution, expressed in all tissues examined. As to expression, only expressed in spermatocytes. Expression increases at pachytene (17 days old) and decreases after completion of meiosis II (7 weeks old).

The protein resides in the nucleus. It carries out the reaction Couples ATP hydrolysis with the unwinding of duplex DNA by translocating in the 3'-5' direction.. The catalysed reaction is ATP + H2O = ADP + phosphate + H(+). It catalyses the reaction dATP + H2O = dADP + phosphate + H(+). Functionally, DNA helicase that plays a role in DNA damage repair and genome stability. Exhibits a magnesium- and ATP-dependent DNA-helicase activity that unwinds single- and double-stranded DNA in a 3'-5' direction. Plays a role in restoring regressed replication forks. Required to restart stalled replication forks induced by abortive topoisomerase 1 and 2 lesions. May play a role in the repair of DNA that is damaged by ultraviolet light or other mutagens. The polypeptide is ATP-dependent DNA helicase Q1 (Recql) (Mus musculus (Mouse)).